The chain runs to 329 residues: Vomeronasal type-1 receptor 42 (329 aa).

At methionine 1–threonine 32 the chain is on the extracellular side. The helical transmembrane segment at phenylalanine 33 to leucine 53 threads the bilayer. Topologically, residues lysine 54–aspartate 65 are cytoplasmic. The helical transmembrane segment at leucine 66–alanine 86 threads the bilayer. Over threonine 87–arginine 109 the chain is Extracellular. Cysteine 101 and cysteine 188 are joined by a disulfide. The helical transmembrane segment at valine 110–leucine 130 threads the bilayer. Residues serine 131–glycine 150 lie on the Cytoplasmic side of the membrane. A helical transmembrane segment spans residues alanine 151–isoleucine 171. Topologically, residues alanine 172–glutamate 209 are extracellular. An N-linked (GlcNAc...) asparagine glycan is attached at asparagine 175. The chain crosses the membrane as a helical span at residues phenylalanine 210–histidine 230. Residues arginine 231–glutamine 254 are Cytoplasmic-facing. The chain crosses the membrane as a helical span at residues threonine 255–cysteine 275. Residues serine 276–threonine 285 lie on the Extracellular side of the membrane. The chain crosses the membrane as a helical span at residues serine 286–methionine 306. The Cytoplasmic portion of the chain corresponds to serine 307 to histidine 329.

This sequence belongs to the G-protein coupled receptor 1 family.

The protein localises to the cell membrane. Its function is as follows. Putative pheromone receptor implicated in the regulation of social and reproductive behavior. The sequence is that of Vomeronasal type-1 receptor 42 (Vmn1r42) from Mus musculus (Mouse).